We begin with the raw amino-acid sequence, 203 residues long: Probable nicotinate-nucleotide adenylyltransferase (203 aa).

Belongs to the NadD family.

The catalysed reaction is nicotinate beta-D-ribonucleotide + ATP + H(+) = deamido-NAD(+) + diphosphate. It participates in cofactor biosynthesis; NAD(+) biosynthesis; deamido-NAD(+) from nicotinate D-ribonucleotide: step 1/1. Its function is as follows. Catalyzes the reversible adenylation of nicotinate mononucleotide (NaMN) to nicotinic acid adenine dinucleotide (NaAD). The sequence is that of Probable nicotinate-nucleotide adenylyltransferase from Dictyoglomus turgidum (strain DSM 6724 / Z-1310).